We begin with the raw amino-acid sequence, 85 residues long: ATP synthase subunit c (85 aa).

The next 2 membrane-spanning stretches (helical) occupy residues 10 to 30 (IAVA…FGLL) and 53 to 73 (FIVA…ALFF).

This sequence belongs to the ATPase C chain family. As to quaternary structure, F-type ATPases have 2 components, F(1) - the catalytic core - and F(0) - the membrane proton channel. F(1) has five subunits: alpha(3), beta(3), gamma(1), delta(1), epsilon(1). F(0) has three main subunits: a(1), b(2) and c(10-14). The alpha and beta chains form an alternating ring which encloses part of the gamma chain. F(1) is attached to F(0) by a central stalk formed by the gamma and epsilon chains, while a peripheral stalk is formed by the delta and b chains.

The protein resides in the cell inner membrane. F(1)F(0) ATP synthase produces ATP from ADP in the presence of a proton or sodium gradient. F-type ATPases consist of two structural domains, F(1) containing the extramembraneous catalytic core and F(0) containing the membrane proton channel, linked together by a central stalk and a peripheral stalk. During catalysis, ATP synthesis in the catalytic domain of F(1) is coupled via a rotary mechanism of the central stalk subunits to proton translocation. In terms of biological role, key component of the F(0) channel; it plays a direct role in translocation across the membrane. A homomeric c-ring of between 10-14 subunits forms the central stalk rotor element with the F(1) delta and epsilon subunits. This is ATP synthase subunit c from Pseudomonas syringae pv. syringae (strain B728a).